A 28-amino-acid polypeptide reads, in one-letter code: Probable small spore coat assembly protein B (28 aa).

The helical transmembrane segment at 4 to 24 (VFAGGFALLVVLFILLIIIGA) threads the bilayer.

It belongs to the SscA family.

The protein resides in the membrane. In Bacillus subtilis (strain 168), this protein is Probable small spore coat assembly protein B.